A 236-amino-acid chain; its full sequence is Large ribosomal subunit protein uL3 (236 aa).

2 disordered regions span residues 132–153 (SNRA…GMAQ) and 200–236 (KGGD…KKGG). Residues 133–145 (NRASHGNSRSHNV) show a composition bias toward polar residues. Gln153 is subject to N5-methylglutamine. Residues 206 to 216 (VSPSIRSARPT) show a composition bias toward polar residues. The segment covering 217–228 (NNGNVNAAAKGG) has biased composition (low complexity).

Belongs to the universal ribosomal protein uL3 family. Part of the 50S ribosomal subunit. Forms a cluster with proteins L14 and L19. Methylated by PrmB.

One of the primary rRNA binding proteins, it binds directly near the 3'-end of the 23S rRNA, where it nucleates assembly of the 50S subunit. The protein is Large ribosomal subunit protein uL3 of Nitrosospira multiformis (strain ATCC 25196 / NCIMB 11849 / C 71).